The sequence spans 332 residues: L-lactate dehydrogenase A chain (332 aa).

NAD(+) is bound by residues 29 to 57 (GMVGMASAVSILLKDLCDELALVDVMEDK) and R99. Substrate contacts are provided by R106, N138, and R169. N138 provides a ligand contact to NAD(+). H193 functions as the Proton acceptor in the catalytic mechanism. Residue T248 participates in substrate binding.

Belongs to the LDH/MDH superfamily. LDH family. In terms of assembly, homotetramer.

The protein localises to the cytoplasm. It carries out the reaction (S)-lactate + NAD(+) = pyruvate + NADH + H(+). It functions in the pathway fermentation; pyruvate fermentation to lactate; (S)-lactate from pyruvate: step 1/1. Its function is as follows. Interconverts simultaneously and stereospecifically pyruvate and lactate with concomitant interconversion of NADH and NAD(+). In Sphyraena lucasana (Lucas barracuda), this protein is L-lactate dehydrogenase A chain (ldha).